Consider the following 259-residue polypeptide: Tryptophan synthase alpha chain (259 aa).

Catalysis depends on proton acceptor residues glutamate 42 and aspartate 53.

It belongs to the TrpA family. Tetramer of two alpha and two beta chains.

It carries out the reaction (1S,2R)-1-C-(indol-3-yl)glycerol 3-phosphate + L-serine = D-glyceraldehyde 3-phosphate + L-tryptophan + H2O. It participates in amino-acid biosynthesis; L-tryptophan biosynthesis; L-tryptophan from chorismate: step 5/5. The alpha subunit is responsible for the aldol cleavage of indoleglycerol phosphate to indole and glyceraldehyde 3-phosphate. This chain is Tryptophan synthase alpha chain, found in Erythrobacter litoralis (strain HTCC2594).